Here is a 1801-residue protein sequence, read N- to C-terminus: U3 small nucleolar RNA-associated protein 10 (1801 aa).

2 consecutive transmembrane segments (helical) span residues 102–122 (LALV…EWLI) and 136–156 (ILTF…AILP). Residues 581 to 619 (DVDVQALLPFMLIALADPSERVRSGAVDALANIGKVVDK) form an HEAT 1 repeat. The next 2 helical transmembrane spans lie at 939–959 (IQSG…AIVN) and 995–1015 (ALLL…HSVM). HEAT repeat units lie at residues 1038 to 1076 (DQTI…AFEH), 1110 to 1148 (YSMD…DSLK), 1244 to 1282 (TLTT…QSPE), 1288 to 1327 (QTRM…KYGK), and 1756 to 1794 (LALL…VLGE).

The protein belongs to the HEATR1/UTP10 family. Component of the ribosomal small subunit (SSU) processome.

The protein resides in the nucleus. Its subcellular location is the nucleolus. It localises to the membrane. Functionally, involved in nucleolar processing of pre-18S ribosomal RNA. Involved in ribosome biosynthesis. The sequence is that of U3 small nucleolar RNA-associated protein 10 from Emericella nidulans (strain FGSC A4 / ATCC 38163 / CBS 112.46 / NRRL 194 / M139) (Aspergillus nidulans).